The following is a 238-amino-acid chain: MQLAVNIDHIATLRNARNEQQPDPVTAAAIAELSGASGIVCHLREDRRHIKDRDLERLRESVTTKLDLEMAMTEEMQRIAIRTKPELITLVPEKREELTTEGGFDIISHYDRLAEFIKPVRDAGIEVSLFIEPEEKAVALAAKAGADIVEMHTGPYSLKKRPEDIDAEIKRIRIAASYARDSGLRVVAGHGLNYYNILPFRRIEEIEEVSIGHALIARAALAGMETAVRDMLHLINEA.

N6 contributes to the 3-amino-2-oxopropyl phosphate binding site. 1-deoxy-D-xylulose 5-phosphate is bound at residue 8-9; that stretch reads DH. R17 contributes to the 3-amino-2-oxopropyl phosphate binding site. H42 (proton acceptor) is an active-site residue. Residues R44 and H49 each contribute to the 1-deoxy-D-xylulose 5-phosphate site. Catalysis depends on E69, which acts as the Proton acceptor. Residue T99 participates in 1-deoxy-D-xylulose 5-phosphate binding. H190 (proton donor) is an active-site residue. 3-amino-2-oxopropyl phosphate is bound by residues G191 and 212-213; that span reads GH.

It belongs to the PNP synthase family. Homooctamer; tetramer of dimers.

Its subcellular location is the cytoplasm. The enzyme catalyses 3-amino-2-oxopropyl phosphate + 1-deoxy-D-xylulose 5-phosphate = pyridoxine 5'-phosphate + phosphate + 2 H2O + H(+). The protein operates within cofactor biosynthesis; pyridoxine 5'-phosphate biosynthesis; pyridoxine 5'-phosphate from D-erythrose 4-phosphate: step 5/5. In terms of biological role, catalyzes the complicated ring closure reaction between the two acyclic compounds 1-deoxy-D-xylulose-5-phosphate (DXP) and 3-amino-2-oxopropyl phosphate (1-amino-acetone-3-phosphate or AAP) to form pyridoxine 5'-phosphate (PNP) and inorganic phosphate. In Chlorobium phaeobacteroides (strain BS1), this protein is Pyridoxine 5'-phosphate synthase.